Consider the following 1195-residue polypeptide: Cullin-associated NEDD8-dissociated protein 1 (1195 aa).

HEAT repeat units follow at residues 1 to 37 (MHDI…DESA), 45 to 83 (NQSL…YLSN), 168 to 206 (NPVT…KVAL), 397 to 434 (ELLS…TSPR), 436 to 474 (STNV…FDNT), 703 to 742 (ETHR…QIPD), 846 to 885 (QKHI…ACNE), and 999 to 1037 (PILD…EGLE).

It belongs to the CAND family.

Its function is as follows. Key assembly factor of SCF (SKP1-CUL1-F-box protein) E3 ubiquitin ligase complexes that promotes the exchange of the substrate-recognition F-box subunit in SCF complexes, thereby playing a key role in the cellular repertoire of SCF complexes. Acts as a F-box protein exchange factor. This is Cullin-associated NEDD8-dissociated protein 1 (TIP120) from Candida albicans (strain SC5314 / ATCC MYA-2876) (Yeast).